A 100-amino-acid polypeptide reads, in one-letter code: Small ribosomal subunit protein uS14c (100 aa).

The protein belongs to the universal ribosomal protein uS14 family. Part of the 30S ribosomal subunit.

The protein localises to the plastid. Its subcellular location is the chloroplast. Binds 16S rRNA, required for the assembly of 30S particles. The sequence is that of Small ribosomal subunit protein uS14c from Morus indica (Mulberry).